We begin with the raw amino-acid sequence, 284 residues long: Stomatin (284 aa).

The Cytoplasmic portion of the chain corresponds to 1–31; it reads MSDKRQSSHVQSQRIPESFRENSKTELGACG. A Phosphoserine modification is found at Ser18. A lipid anchor (S-palmitoyl cysteine) is attached at Cys30. The stretch at 32–52 is an intramembrane region; that stretch reads WILVAASFFFVIITFPISIWI. The Cytoplasmic segment spans residues 53-284; the sequence is CIKIVKEYER…MLQGIMGSNH (232 aa). Cys87 is lipidated: S-palmitoyl cysteine. A phosphoserine mark is found at Ser161 and Ser244. The tract at residues 265-273 is required for homooligomerization; the sequence is STIVFPLPV. The tract at residues 267–269 is required for lipid raft association; sequence IVF. The interaction with LANCL1 stretch occupies residues 273–284; sequence VDMLQGIMGSNH.

Belongs to the band 7/mec-2 family. As to quaternary structure, interacts with LANCL1. Interacts with SLC2A1. Interacts with SLC4A1; this interaction positively regulates SLC4A1 activity. Identified in large complexes with SLC40A1, SLC14A1, SLC29A1 and AQP1. Homodimer and higher order homooligomers. The homodimer is banana-shaped. Interacts with ASIC1, ASIC2 and ASIC3. Interacts with STOML1; may redistribute STOM from the plasma membrane to late endosomes. As to expression, expressed in all sensory neurons of the dorsal root ganglia. In the CNS, expressed in many neurons of the spinal cord, medulla and pons. Expressed only in scattered neurons in the cortex, hippocampus, thalamus and basal ganglia. In the cerebellum, expressed in all Purkinje cells (at protein level). Widely expressed with high levels in heart, liver, skeletal muscle and testis and low levels in lung, brain and spleen.

The protein resides in the cell membrane. The protein localises to the cytoplasm. It is found in the cytoskeleton. Its subcellular location is the membrane raft. It localises to the melanosome. The protein resides in the cytoplasmic vesicle. Regulates ion channel activity and transmembrane ion transport. Regulates ASIC2 and ASIC3 channel activity. The chain is Stomatin from Mus musculus (Mouse).